The sequence spans 898 residues: Zinc finger protein 574 (898 aa).

3 consecutive C2H2-type zinc fingers follow at residues 16-38 (YVCSECNQLYGSLEEVLVHQNSH), 76-98 (YQCLECGQLLLSPSQLLEHQELH), and 126-148 (YECVDCKALFASQEMWLSHRQTH). S164 carries the post-translational modification Phosphoserine. Residues 213 to 235 (YKCSECSQLFQMPADFLEHQATH) form a C2H2-type 4 zinc finger. Positions 243 to 305 (AEEPATQQET…PRRSSSGESG (63 aa)) are disordered. Positions 273 to 290 (HSYELRNELRNGEAMGRD) are enriched in basic and acidic residues. S301 bears the Phosphoserine mark. 4 C2H2-type zinc fingers span residues 310–332 (LFCSACDQIFLSPHQLQQHLRSH), 337–359 (FKCPLCSRVFPSPSSLDQHLGDH), 365–387 (FLCVDCGLAFGTEALLLAHRRAH), and 393–414 (HSCPCGKTFVNLTKFLYHRRTH). Positions 417-460 (GGVPLPTTPVPPEEPAISFPEPAPAETGELEAPELPVSEESSAE) are disordered. C2H2-type zinc fingers lie at residues 467-490 (YRCLLCSREFSKALQLTRHQRFVH), 496-518 (HKCSICGKMFKKKSHVRNHLRTH), 524-546 (FPCPDCSKPFNSPANLARHRLTH), 552-574 (YRCGDCGKAFTQSSTLRQHRLVH), 580-602 (YRCQECGVRFHRPYRLLMHRYHH), and 608-631 (YKCRECPRSFLLRRLLEVHQLVVH). The C2H2-type 15; degenerate zinc finger occupies 637–660 (HRCPSCGAAFPSSLRLREHRCAAA). The C2H2-type 16 zinc finger occupies 668–690 (FECGTCGKKVGSAARLQAHEAAH). The segment at 691-735 (AAAGPGEVLAKEPPAPRAARATRTPVAPSPTALGGTTSAAPAAPA) is disordered. Residues 707–734 (RAARATRTPVAPSPTALGGTTSAAPAAP) show a composition bias toward low complexity. At S719 the chain carries Phosphoserine. T726 bears the Phosphothreonine mark. 4 C2H2-type zinc fingers span residues 740–762 (LECSECKKLFSTETSLQVHRRIH), 768–790 (YPCPDCGKAFRQSTHLKDHRRLH), 796–818 (FACEVCGKAFAISMRLAEHRRIH), and 824–846 (YSCPDCGKSYRSFSNLWKHRKTH). Position 834 is an asymmetric dimethylarginine (R834).

Belongs to the krueppel C2H2-type zinc-finger protein family.

Its subcellular location is the nucleus. May be involved in transcriptional regulation. The chain is Zinc finger protein 574 (Znf574) from Rattus norvegicus (Rat).